Reading from the N-terminus, the 203-residue chain is Glycerol-3-phosphate acyltransferase (203 aa).

4 helical membrane passes run 4–24 (MAVT…AVLI), 80–100 (PVLL…PLFF), 117–137 (PIGL…AILF), and 139–159 (YSSL…WMIK).

The protein belongs to the PlsY family. Probably interacts with PlsX.

Its subcellular location is the cell inner membrane. The catalysed reaction is an acyl phosphate + sn-glycerol 3-phosphate = a 1-acyl-sn-glycero-3-phosphate + phosphate. It participates in lipid metabolism; phospholipid metabolism. Functionally, catalyzes the transfer of an acyl group from acyl-phosphate (acyl-PO(4)) to glycerol-3-phosphate (G3P) to form lysophosphatidic acid (LPA). This enzyme utilizes acyl-phosphate as fatty acyl donor, but not acyl-CoA or acyl-ACP. The chain is Glycerol-3-phosphate acyltransferase from Vibrio vulnificus (strain YJ016).